Reading from the N-terminus, the 170-residue chain is Peptide deformylase 2 (170 aa).

Residues cysteine 94 and histidine 136 each contribute to the Fe cation site. The active site involves glutamate 137. Histidine 140 provides a ligand contact to Fe cation.

Belongs to the polypeptide deformylase family. Fe(2+) is required as a cofactor.

It catalyses the reaction N-terminal N-formyl-L-methionyl-[peptide] + H2O = N-terminal L-methionyl-[peptide] + formate. Its function is as follows. Removes the formyl group from the N-terminal Met of newly synthesized proteins. Requires at least a dipeptide for an efficient rate of reaction. N-terminal L-methionine is a prerequisite for activity but the enzyme has broad specificity at other positions. The chain is Peptide deformylase 2 from Xanthomonas axonopodis pv. citri (strain 306).